The chain runs to 196 residues: dITP/XTP pyrophosphatase (196 aa).

Thr-8–Lys-13 contributes to the substrate binding site. Residues Glu-41 and Asp-70 each coordinate Mg(2+). The Proton acceptor role is filled by Asp-70. Substrate is bound by residues Ser-71, Phe-153–Asp-156, Lys-176, and His-181–Arg-182.

It belongs to the HAM1 NTPase family. In terms of assembly, homodimer. It depends on Mg(2+) as a cofactor.

The catalysed reaction is XTP + H2O = XMP + diphosphate + H(+). It catalyses the reaction dITP + H2O = dIMP + diphosphate + H(+). The enzyme catalyses ITP + H2O = IMP + diphosphate + H(+). Functionally, pyrophosphatase that catalyzes the hydrolysis of nucleoside triphosphates to their monophosphate derivatives, with a high preference for the non-canonical purine nucleotides XTP (xanthosine triphosphate), dITP (deoxyinosine triphosphate) and ITP. Seems to function as a house-cleaning enzyme that removes non-canonical purine nucleotides from the nucleotide pool, thus preventing their incorporation into DNA/RNA and avoiding chromosomal lesions. In Bacillus licheniformis (strain ATCC 14580 / DSM 13 / JCM 2505 / CCUG 7422 / NBRC 12200 / NCIMB 9375 / NCTC 10341 / NRRL NRS-1264 / Gibson 46), this protein is dITP/XTP pyrophosphatase.